The chain runs to 228 residues: Methylthioribulose-1-phosphate dehydratase (228 aa).

Cysteine 92 is a binding site for substrate. Residues histidine 110 and histidine 112 each contribute to the Zn(2+) site. The Proton donor/acceptor role is filled by glutamate 135. Histidine 192 contacts Zn(2+).

It belongs to the aldolase class II family. MtnB subfamily. The cofactor is Zn(2+).

Its subcellular location is the cytoplasm. It is found in the nucleus. It catalyses the reaction 5-(methylsulfanyl)-D-ribulose 1-phosphate = 5-methylsulfanyl-2,3-dioxopentyl phosphate + H2O. It functions in the pathway amino-acid biosynthesis; L-methionine biosynthesis via salvage pathway; L-methionine from S-methyl-5-thio-alpha-D-ribose 1-phosphate: step 2/6. Its function is as follows. Catalyzes the dehydration of methylthioribulose-1-phosphate (MTRu-1-P) into 2,3-diketo-5-methylthiopentyl-1-phosphate (DK-MTP-1-P). This chain is Methylthioribulose-1-phosphate dehydratase, found in Schizosaccharomyces pombe (strain 972 / ATCC 24843) (Fission yeast).